The chain runs to 532 residues: Glucose-6-phosphate isomerase (532 aa).

The Proton donor role is filled by Glu-322. Residues His-351 and Lys-457 contribute to the active site.

This sequence belongs to the GPI family.

Its subcellular location is the cytoplasm. The catalysed reaction is alpha-D-glucose 6-phosphate = beta-D-fructose 6-phosphate. It participates in carbohydrate biosynthesis; gluconeogenesis. Its pathway is carbohydrate degradation; glycolysis; D-glyceraldehyde 3-phosphate and glycerone phosphate from D-glucose: step 2/4. Its function is as follows. Catalyzes the reversible isomerization of glucose-6-phosphate to fructose-6-phosphate. The chain is Glucose-6-phosphate isomerase from Synechococcus sp. (strain JA-2-3B'a(2-13)) (Cyanobacteria bacterium Yellowstone B-Prime).